The sequence spans 874 residues: Interleukin-12 receptor subunit beta-2 (874 aa).

A signal peptide spans 1-23; sequence MAQTVRECSLALLFLFMWLLIKA. At 24–637 the chain is on the extracellular side; that stretch reads NIDVCKLGTV…REFCPQGKAN (614 aa). N-linked (GlcNAc...) asparagine glycans are attached at residues N48, N101, N114, N142, N151, N169, N179, N224, N252, N279, N287, N323, N391, and N495. Fibronectin type-III domains follow at residues 139-237, 242-335, 336-430, 438-530, and 536-635; these read PPQN…FLDI, PPWD…TPEE, EPVG…NIVD, APHQ…IRGD, and PVSG…PQGK. The short motif at 321–325 is the WSXWS motif element; that stretch reads WSNWS. Residues 638–658 form a helical membrane-spanning segment; that stretch reads WKAFVISSICIAIITVGTFSI. At 659–874 the chain is on the cytoplasmic side; that stretch reads RYFRQKAFTL…GYDSLMSNEA (216 aa). The short motif at 677–685 is the Box 1 motif element; sequence YSRTIPDPA. Phosphotyrosine occurs at positions 757, 804, and 811.

It belongs to the type I cytokine receptor family. Type 2 subfamily. Heterodimer/heterooligomer; disulfide-linked. The functional high affinity IL12 receptor is composed of I12RB1 and IL12RB2. Il12RB2 binds JAK2 (via its N-terminal) through a membrane-proximal region of the cytoplasmic domain. In terms of processing, on IL12 stimulation, phosphorylated on C-terminal tyrosine residues. Phosphorylation of any one of Tyr-757, Tyr-804 or Tyr-811 can activate STAT4, IFN-gamma production, and T-cell proliferation. Tyr-811 is the dominant site of cell proliferation. In terms of tissue distribution, expressed in developing T-helper (TH) cells.

The protein resides in the membrane. Functionally, receptor for interleukin-12. This subunit is the signaling component coupling to the JAK2/STAT4 pathway. Promotes the proliferation of T-cells as well as NK cells. Induces the promotion of T-cells towards the Th1 phenotype by strongly enhancing IFN-gamma production. Can also activate STAT3. This Mus musculus (Mouse) protein is Interleukin-12 receptor subunit beta-2 (Il12rb2).